A 439-amino-acid polypeptide reads, in one-letter code: Acyl transferase 4 (439 aa).

Active-site proton acceptor residues include His166 and Asp382.

This sequence belongs to the plant acyltransferase family.

Functionally, grass-specific monolignol p-coumaroyl transferase involved in the biosynthesis of acylated monolignols or monolignol conjugates that serve as monomer precursors of lignin. Can synthesize sinapyl p-coumarate, p-coumaryl p-coumarate, sinapyl caffeate and p-coumaryl caffeate in vitro. The sequence is that of Acyl transferase 4 from Oryza sativa subsp. japonica (Rice).